We begin with the raw amino-acid sequence, 341 residues long: Glycerol-3-phosphate dehydrogenase [NAD(P)+] (341 aa).

NADPH-binding residues include Ser11, Trp12, Arg32, and Lys106. Sn-glycerol 3-phosphate is bound by residues Lys106, Gly137, and Thr139. Ala141 serves as a coordination point for NADPH. Sn-glycerol 3-phosphate contacts are provided by Lys192, Asp245, Ser255, Arg256, and Asn257. Lys192 functions as the Proton acceptor in the catalytic mechanism. Arg256 provides a ligand contact to NADPH. 2 residues coordinate NADPH: Val280 and Glu282.

It belongs to the NAD-dependent glycerol-3-phosphate dehydrogenase family.

It localises to the cytoplasm. The enzyme catalyses sn-glycerol 3-phosphate + NAD(+) = dihydroxyacetone phosphate + NADH + H(+). The catalysed reaction is sn-glycerol 3-phosphate + NADP(+) = dihydroxyacetone phosphate + NADPH + H(+). Its pathway is membrane lipid metabolism; glycerophospholipid metabolism. Its function is as follows. Catalyzes the reduction of the glycolytic intermediate dihydroxyacetone phosphate (DHAP) to sn-glycerol 3-phosphate (G3P), the key precursor for phospholipid synthesis. The polypeptide is Glycerol-3-phosphate dehydrogenase [NAD(P)+] (Exiguobacterium sp. (strain ATCC BAA-1283 / AT1b)).